The sequence spans 138 residues: NADH-quinone oxidoreductase subunit A 1 (138 aa).

The next 3 helical transmembrane spans lie at F19–A39, F74–W94, and L103–L123.

It belongs to the complex I subunit 3 family. As to quaternary structure, NDH-1 is composed of 14 different subunits. Subunits NuoA, H, J, K, L, M, N constitute the membrane sector of the complex.

Its subcellular location is the cell inner membrane. It carries out the reaction a quinone + NADH + 5 H(+)(in) = a quinol + NAD(+) + 4 H(+)(out). Functionally, NDH-1 shuttles electrons from NADH, via FMN and iron-sulfur (Fe-S) centers, to quinones in the respiratory chain. The immediate electron acceptor for the enzyme in this species is believed to be ubiquinone. Couples the redox reaction to proton translocation (for every two electrons transferred, four hydrogen ions are translocated across the cytoplasmic membrane), and thus conserves the redox energy in a proton gradient. This chain is NADH-quinone oxidoreductase subunit A 1, found in Geobacter metallireducens (strain ATCC 53774 / DSM 7210 / GS-15).